We begin with the raw amino-acid sequence, 186 residues long: Elongation factor P (186 aa).

This sequence belongs to the elongation factor P family.

Its subcellular location is the cytoplasm. The protein operates within protein biosynthesis; polypeptide chain elongation. In terms of biological role, involved in peptide bond synthesis. Stimulates efficient translation and peptide-bond synthesis on native or reconstituted 70S ribosomes in vitro. Probably functions indirectly by altering the affinity of the ribosome for aminoacyl-tRNA, thus increasing their reactivity as acceptors for peptidyl transferase. This is Elongation factor P from Pelagibacter ubique (strain HTCC1062).